A 597-amino-acid polypeptide reads, in one-letter code: Uptake hydrogenase large subunit (597 aa).

Residues Cys-75, Cys-78, Cys-576, and Cys-579 each contribute to the Ni(2+) site.

Belongs to the [NiFe]/[NiFeSe] hydrogenase large subunit family. Heterodimer of a large and a small subunit. Ni(2+) serves as cofactor.

The protein localises to the cell membrane. The catalysed reaction is H2 + A = AH2. This enzyme recycles the H(2) produced by nitrogenase to increase the production of ATP and to protect nitrogenase against inhibition or damage by O(2) under carbon- or phosphate-limited conditions. This is Uptake hydrogenase large subunit (hupB) from Rhodobacter capsulatus (Rhodopseudomonas capsulata).